Here is a 117-residue protein sequence, read N- to C-terminus: MPRVKTGTVRRQRHKKVLKLARGFYSGRRKHFRKAKEQLERSMYYAFRDRKQKKRDFRSLWITRINAACRINEISYSRFMHGLKLANIELDRKILADMAMNEPANFAKIVEAAKKAL.

The protein belongs to the bacterial ribosomal protein bL20 family.

Its function is as follows. Binds directly to 23S ribosomal RNA and is necessary for the in vitro assembly process of the 50S ribosomal subunit. It is not involved in the protein synthesizing functions of that subunit. The chain is Large ribosomal subunit protein bL20 from Wolinella succinogenes (strain ATCC 29543 / DSM 1740 / CCUG 13145 / JCM 31913 / LMG 7466 / NCTC 11488 / FDC 602W) (Vibrio succinogenes).